The chain runs to 122 residues: Large ribosomal subunit protein uL14 (122 aa).

This sequence belongs to the universal ribosomal protein uL14 family. Part of the 50S ribosomal subunit. Forms a cluster with proteins L3 and L19. In the 70S ribosome, L14 and L19 interact and together make contacts with the 16S rRNA in bridges B5 and B8.

Binds to 23S rRNA. Forms part of two intersubunit bridges in the 70S ribosome. The chain is Large ribosomal subunit protein uL14 from Pelobacter propionicus (strain DSM 2379 / NBRC 103807 / OttBd1).